We begin with the raw amino-acid sequence, 616 residues long: Chaperone protein HscA (616 aa).

The protein belongs to the heat shock protein 70 family.

In terms of biological role, chaperone involved in the maturation of iron-sulfur cluster-containing proteins. Has a low intrinsic ATPase activity which is markedly stimulated by HscB. Involved in the maturation of IscU. This Photorhabdus laumondii subsp. laumondii (strain DSM 15139 / CIP 105565 / TT01) (Photorhabdus luminescens subsp. laumondii) protein is Chaperone protein HscA.